A 254-amino-acid chain; its full sequence is Phosphoribosylaminoimidazole-succinocarboxamide synthase (254 aa).

It belongs to the SAICAR synthetase family.

It catalyses the reaction 5-amino-1-(5-phospho-D-ribosyl)imidazole-4-carboxylate + L-aspartate + ATP = (2S)-2-[5-amino-1-(5-phospho-beta-D-ribosyl)imidazole-4-carboxamido]succinate + ADP + phosphate + 2 H(+). It participates in purine metabolism; IMP biosynthesis via de novo pathway; 5-amino-1-(5-phospho-D-ribosyl)imidazole-4-carboxamide from 5-amino-1-(5-phospho-D-ribosyl)imidazole-4-carboxylate: step 1/2. This Sinorhizobium fredii (strain NBRC 101917 / NGR234) protein is Phosphoribosylaminoimidazole-succinocarboxamide synthase.